A 217-amino-acid polypeptide reads, in one-letter code: Probable GTP-binding protein EngB (217 aa).

Positions 29–213 constitute an EngB-type G domain; the sequence is GPLEVAFAGR…RQAIGETVGV (185 aa). GTP is bound by residues 37 to 44, 64 to 68, 91 to 94, 158 to 161, and 192 to 194; these read GRSNVGKS, GRTQE, DMPG, TKTD, and TSS. Positions 44 and 66 each coordinate Mg(2+).

Belongs to the TRAFAC class TrmE-Era-EngA-EngB-Septin-like GTPase superfamily. EngB GTPase family. The cofactor is Mg(2+).

Necessary for normal cell division and for the maintenance of normal septation. The chain is Probable GTP-binding protein EngB from Rhizobium leguminosarum bv. trifolii (strain WSM2304).